Reading from the N-terminus, the 355-residue chain is MNCEREQLRGNQEAAAAPDTMAQPYASAQFAPPQNGIPAEYTAPHPHPAPEYTGQTTVPEHTLNLYPPAQSHSEQSAADTSAHTVSGTATTDDSAPTDGQPQTQPSENTENKSQPKRLHVSNIPFRFRDPDLRQMFGGFGFVTFENSADADRAREKLHGTVVEGRKIEVNNATARVMTNKKTVNPYTNGWKLNPVVGAVYSPEFYAGTVLLCQANQEGSSMYSAPSSLVYTSAMPGFPYPAATAAAAYRGAHLRGRGRTVYNTFRAAAPPPPIPAYGGVVYQDGFYGADIYGGYAAYRYAQPTPATAAAYSDRNQFVFVAADEISCNTSAVTDEFMLPTPTTTHLLQPPPTALVP.

Residues 1–123 (MNCEREQLRG…QPKRLHVSNI (123 aa)) are disordered. Over residues 70–112 (QSHSEQSAADTSAHTVSGTATTDDSAPTDGQPQTQPSENTENK) the composition is skewed to polar residues. One can recognise an RRM domain in the interval 116 to 174 (KRLHVSNIPFRFRDPDLRQMFGGFGFVTFENSADADRAREKLHGTVVEGRKIEVNNATA). Arg298 is subject to Asymmetric dimethylarginine.

In terms of assembly, binds to the C-terminus of ATXN2.

Its subcellular location is the nucleus. It localises to the cytoplasm. RNA-binding protein that regulates alternative splicing events by binding to 5'-UGCAUGU-3' elements. Prevents binding of U2AF2 to the 3'-splice site. Regulates alternative splicing of tissue-specific exons and of differentially spliced exons during erythropoiesis. The protein is RNA binding protein fox-1 homolog 1 (RBFOX1) of Bos taurus (Bovine).